The chain runs to 347 residues: Anthranilate phosphoribosyltransferase (347 aa).

Residues Gly-86, 89-90 (GD), Thr-94, 96-99 (NIST), 114-122 (KHGNRSVSS), and Ser-126 contribute to the 5-phospho-alpha-D-ribose 1-diphosphate site. Position 86 (Gly-86) interacts with anthranilate. Ser-98 is a Mg(2+) binding site. Residue Asn-117 participates in anthranilate binding. Position 172 (Arg-172) interacts with anthranilate. The Mg(2+) site is built by Asp-230 and Glu-231.

Belongs to the anthranilate phosphoribosyltransferase family. In terms of assembly, homodimer. Mg(2+) is required as a cofactor.

It catalyses the reaction N-(5-phospho-beta-D-ribosyl)anthranilate + diphosphate = 5-phospho-alpha-D-ribose 1-diphosphate + anthranilate. It functions in the pathway amino-acid biosynthesis; L-tryptophan biosynthesis; L-tryptophan from chorismate: step 2/5. Its function is as follows. Catalyzes the transfer of the phosphoribosyl group of 5-phosphorylribose-1-pyrophosphate (PRPP) to anthranilate to yield N-(5'-phosphoribosyl)-anthranilate (PRA). The polypeptide is Anthranilate phosphoribosyltransferase (Shewanella frigidimarina (strain NCIMB 400)).